Consider the following 962-residue polypeptide: Probable transport protein MmpL9 (962 aa).

A run of 12 helical transmembrane segments spans residues 25–45 (LAAI…SVAV), 201–223 (LITG…SIAT), 225–247 (LLIL…FLGY), 256–276 (FVVN…AIFL), 302–322 (ANVI…LSFA), 335–355 (AIGM…IIAI), 383–403 (WPGP…LALP), 768–788 (YDIL…MLMI), 796–816 (LVIV…SVLI), 820–840 (FVGL…LLAV), 867–887 (AMAG…FTMA), and 895–915 (RVIG…TLVV).

Belongs to the resistance-nodulation-cell division (RND) (TC 2.A.6) family. MmpL subfamily.

The protein resides in the cell membrane. The chain is Probable transport protein MmpL9 (mmpL9) from Mycobacterium tuberculosis (strain ATCC 25618 / H37Rv).